Consider the following 687-residue polypeptide: Chloride channel protein ClC-Ka (687 aa).

4 helical membrane-spanning segments follow: residues 52–72 (FLMT…FALG), 161–181 (LFLG…AYLG), 202–222 (VAGA…GVLF), and 236–256 (YWRG…LAVF). Residues glutamate 259, glutamate 261, aspartate 278, and glutamate 281 each coordinate Ca(2+). 6 consecutive transmembrane segments (helical) span residues 282–302 (IFFF…YLYC), 325–345 (PLYA…PGVG), 396–416 (FTIF…LILA), 417–437 (TTIP…AAIG), 452–472 (IVAG…AGAA), and 486–506 (LLAF…MAVL). The Cytoplasmic portion of the chain corresponds to 507-687 (AANAIAQSCQ…SALTNPPPAK (181 aa)). 2 CBS domains span residues 551 to 612 (MRRA…ARAS) and 628 to 686 (TEPV…PPPA).

The protein belongs to the chloride channel (TC 2.A.49) family. CLCNKA subfamily. As to quaternary structure, homodimer. Interacts with BSND. Expressed predominantly in the kidney.

It localises to the basolateral cell membrane. It carries out the reaction chloride(in) = chloride(out). It catalyses the reaction bromide(in) = bromide(out). The catalysed reaction is nitrate(in) = nitrate(out). The enzyme catalyses iodide(out) = iodide(in). In terms of biological role, anion-selective channel permeable to small monovalent anions with ion selectivity for chloride &gt; bromide &gt; nitrate &gt; iodide. Forms a homodimeric channel where each subunit has its own ion conduction pathway. May conduct double-barreled currents controlled by two types of gates, two fast gates that control each subunit independently and a slow common gate that opens and shuts off both subunits simultaneously. Assembles with the regulatory subunit BSND/Barttin for sorting at the basolateral plasma membrane domain and functional switch to the ion conducting state. CLCNKA:BSND channels display mostly a linear current-voltage relationship with fast gating at negative potentials. Mediates transepithelial chloride transport from the lumen to interstitial compartment along the thin ascending limb of Henle's loop, contributing to generation of hypertonic medullary interstitium as a countercurrent system to achieve urine concentration. Conducts chloride currents in the stria vascularis of the inner ear to establish the endocochlear potential necessary for normal hearing. The sequence is that of Chloride channel protein ClC-Ka (CLCNKA) from Oryctolagus cuniculus (Rabbit).